The chain runs to 287 residues: MASGREIKTKIKSVQNTRKVTRALEMVSASKIRKAQDRMKTSRPYAQAMKQVIGHLAQASTDYQHPFLVEREQVKRVGFIVISSDRGLAGGLNNNLFRKMLGEAKAWQDKGAEVDLVTIGQKASTFFRRVKVNMVGSVTHIGDVPKLESLIGVIKVMLDAFTEGKIDRVYLVYNRFVNTMVQKASFDQLLPLPPAEKQVAHHDWDYLYEPDAATVLEHVMTRYIESLVYQALLENVASEHAARMVAMKAASDNANKLIGTLQLVYNKARQAAITQEISEIVGGAAAV.

Belongs to the ATPase gamma chain family. In terms of assembly, F-type ATPases have 2 components, CF(1) - the catalytic core - and CF(0) - the membrane proton channel. CF(1) has five subunits: alpha(3), beta(3), gamma(1), delta(1), epsilon(1). CF(0) has three main subunits: a, b and c.

It localises to the cell inner membrane. In terms of biological role, produces ATP from ADP in the presence of a proton gradient across the membrane. The gamma chain is believed to be important in regulating ATPase activity and the flow of protons through the CF(0) complex. This is ATP synthase gamma chain from Stenotrophomonas maltophilia (strain K279a).